Here is a 428-residue protein sequence, read N- to C-terminus: ORC1-type DNA replication protein 5 (428 aa).

ATP is bound by residues 62 to 66 (TGKSL), Y219, and R231.

The protein belongs to the CDC6/cdc18 family.

In terms of biological role, involved in regulation of DNA replication. The protein is ORC1-type DNA replication protein 5 (orc5) of Halobacterium salinarum (strain ATCC 700922 / JCM 11081 / NRC-1) (Halobacterium halobium).